A 195-amino-acid polypeptide reads, in one-letter code: Imidazoleglycerol-phosphate dehydratase (195 aa).

It belongs to the imidazoleglycerol-phosphate dehydratase family.

It localises to the cytoplasm. The catalysed reaction is D-erythro-1-(imidazol-4-yl)glycerol 3-phosphate = 3-(imidazol-4-yl)-2-oxopropyl phosphate + H2O. It functions in the pathway amino-acid biosynthesis; L-histidine biosynthesis; L-histidine from 5-phospho-alpha-D-ribose 1-diphosphate: step 6/9. This Ruegeria sp. (strain TM1040) (Silicibacter sp.) protein is Imidazoleglycerol-phosphate dehydratase.